A 280-amino-acid polypeptide reads, in one-letter code: Ribonuclease Z (280 aa).

The Zn(2+) site is built by His61, His63, Asp65, His66, His153, Asp176, and His240. The active-site Proton acceptor is the Asp65.

The protein belongs to the RNase Z family. In terms of assembly, homodimer. Zn(2+) is required as a cofactor.

It carries out the reaction Endonucleolytic cleavage of RNA, removing extra 3' nucleotides from tRNA precursor, generating 3' termini of tRNAs. A 3'-hydroxy group is left at the tRNA terminus and a 5'-phosphoryl group is left at the trailer molecule.. Functionally, zinc phosphodiesterase, which displays some tRNA 3'-processing endonuclease activity. Probably involved in tRNA maturation, by removing a 3'-trailer from precursor tRNA. This chain is Ribonuclease Z, found in Mycobacterium bovis (strain BCG / Pasteur 1173P2).